Consider the following 75-residue polypeptide: MVCIPCIVIPVLLWVYKRFLEPVLYPIISPIISRFWRKTPLQDTPQQKTSTAECNGAANGSTANGPKTVADKKAD.

A necessary for its localzation to the endoplasmic reticulum and lipid droplets region spans residues 1 to 37; the sequence is MVCIPCIVIPVLLWVYKRFLEPVLYPIISPIISRFWR. The span at 43–65 shows a compositional bias: polar residues; that stretch reads DTPQQKTSTAECNGAANGSTANG. Residues 43–75 are disordered; sequence DTPQQKTSTAECNGAANGSTANGPKTVADKKAD.

Belongs to the UPF0729 family.

It is found in the endoplasmic reticulum. The protein resides in the lipid droplet. The chain is UPF0729 protein C18orf32 homolog from Danio rerio (Zebrafish).